A 399-amino-acid polypeptide reads, in one-letter code: Putative 8-amino-7-oxononanoate synthase (399 aa).

Arginine 24 lines the substrate pocket. Pyridoxal 5'-phosphate is bound at residue 111 to 112 (GW). Residue histidine 141 participates in substrate binding. Pyridoxal 5'-phosphate contacts are provided by residues serine 189, 214-217 (DEAH), and 243-246 (TFSK). Position 246 is an N6-(pyridoxal phosphate)lysine (lysine 246). Residue threonine 360 participates in substrate binding.

The protein belongs to the class-II pyridoxal-phosphate-dependent aminotransferase family. BioF subfamily. Homodimer. The cofactor is pyridoxal 5'-phosphate.

It catalyses the reaction 6-carboxyhexanoyl-[ACP] + L-alanine + H(+) = (8S)-8-amino-7-oxononanoate + holo-[ACP] + CO2. Its pathway is cofactor biosynthesis; biotin biosynthesis. In terms of biological role, catalyzes the decarboxylative condensation of pimeloyl-[acyl-carrier protein] and L-alanine to produce 8-amino-7-oxononanoate (AON), [acyl-carrier protein], and carbon dioxide. The polypeptide is Putative 8-amino-7-oxononanoate synthase (bioF) (Bordetella bronchiseptica (strain ATCC BAA-588 / NCTC 13252 / RB50) (Alcaligenes bronchisepticus)).